The chain runs to 1484 residues: Cystic fibrosis transmembrane conductance regulator (1484 aa).

Over 1–77 (MQRSPLERAN…KLINALRRCF (77 aa)) the chain is Cytoplasmic. Residues 78–98 (FWRFMFYGLLLYLGEVTKAVQ) traverse the membrane as a helical segment. Residues 81 to 365 (FMFYGLLLYL…WAVQMWYDSI (285 aa)) form the ABC transmembrane type-1 1 domain. Over 99 to 122 (PLLLGRIIASYDPDNAHERSIAYY) the chain is Extracellular. Residues 123 to 146 (LGIGLCLLFIVRTLLLHPAVFGLH) traverse the membrane as a helical segment. Residues 147–195 (HIGMQMRIALFSLIYKKTLKLSSRVLDKISTGQLVSLLSNNLNKFDEGL) lie on the Cytoplasmic side of the membrane. A helical transmembrane segment spans residues 196-216 (ALAHFVWIAPLQVMLLMGLLW). The Extracellular portion of the chain corresponds to 217-222 (DLLQAS). A helical membrane pass occupies residues 223–243 (AFCGLAVLVVLVLFQAWLGHR). Over 244–298 (MMKYRDRRAGKINERLVITAEIIENIQSVKAYCWEEAMENMIESLRETELKLTRK) the chain is Cytoplasmic. A helical transmembrane segment spans residues 299–319 (AAYMRYFNSSAFFFSGFFVVF). Residues 320–339 (LSVLPSMLTKGIVLRKIFTT) lie on the Extracellular side of the membrane. The chain crosses the membrane as a helical span at residues 340 to 358 (ISFCIVLRMAVTRQFPWAV). Topologically, residues 359–859 (QMWYDSIGAI…YLRYMTIHKK (501 aa)) are cytoplasmic. ATP is bound by residues Trp-401, Ser-434, 458 to 465 (GSTGAGKT), and Gln-493. In terms of domain architecture, ABC transporter 1 spans 423–646 (SDDKNLIFSN…RPDFSSKLMG (224 aa)). Residue Cys-524 is the site of S-palmitoyl cysteine attachment. Residues Ser-549 and Ser-660 each carry the phosphoserine modification. Residues 654-832 (SAERRNSILT…EEINEEDLKE (179 aa)) form a disordered R region region. Phosphoserine; by PKA is present on Ser-670. The residue at position 686 (Ser-686) is a Phosphoserine. Lys-688 is covalently cross-linked (Glycyl lysine isopeptide (Lys-Gly) (interchain with G-Cter in ubiquitin)). Residues Ser-700, Ser-712, Ser-737, Ser-768, Ser-791, Ser-796, and Ser-814 each carry the phosphoserine modification. Residues 860–880 (LIFVLMMCLVIFLIEVAASLV) form a helical membrane-spanning segment. In terms of domain architecture, ABC transmembrane type-1 2 spans 860-1159 (LIFVLMMCLV…AVNASIDVDS (300 aa)). The Extracellular portion of the chain corresponds to 881-922 (GLCLFKDGASRMNSTSNLNHTSTLDWFAVIVTNTSTYYMFYI). N-linked (GlcNAc...) asparagine glycosylation is found at Asn-893, Asn-899, and Asn-913. A discontinuously helical transmembrane segment spans residues 923–943 (YVGVADTLLALGFLRGLPLVH). Residues 944 to 994 (SLISVSKILHQKMLHSVLQAPMSTFNTLKTGSILNRFSKDMAILDDLLPLT) lie on the Cytoplasmic side of the membrane. A helical membrane pass occupies residues 995–1015 (IFDFIQLLLIVIGAVTVVSAL). Residues 1016 to 1017 (QP) are Extracellular-facing. A helical transmembrane segment spans residues 1018 to 1038 (YIFLASVPVVIAFVLLRAYFL). At 1039-1099 (RTSQQLKQLE…TANWFLYLST (61 aa)) the chain is on the cytoplasmic side. Residues 1100 to 1120 (LRWFQMRIEMVFVIFFILVTF) form a helical membrane-spanning segment. Topologically, residues 1121-1134 (ISILTTGDGEGKVG) are extracellular. The chain crosses the membrane as a helical span at residues 1135-1155 (IVLTLAMNIMGTLQWAVNASI). Residues 1156 to 1484 (DVDSLMRSVS…TEEEVQDTRL (329 aa)) are Cytoplasmic-facing. The region spanning 1212–1445 (MTVQDLTAKY…KSVFKQAISH (234 aa)) is the ABC transporter 2 domain. ATP is bound by residues Tyr-1221 and 1246 to 1253 (GRTGSGKS). Residues 1388 to 1484 (KTLKQAFTNC…TEEEVQDTRL (97 aa)) are interaction with GORASP2. The S-palmitoyl cysteine moiety is linked to residue Cys-1397. 2 positions are modified to phosphoserine: Ser-1446 and Ser-1460. Residues 1463-1484 (LSRPKITALQEETEEEVQDTRL) form a disordered region. The segment covering 1473–1484 (EETEEEVQDTRL) has biased composition (acidic residues). Positions 1482 to 1484 (TRL) match the PDZ-binding motif.

Belongs to the ABC transporter superfamily. ABCC family. CFTR transporter (TC 3.A.1.202) subfamily. In terms of assembly, monomer; does not require oligomerization for channel activity. May form oligomers in the membrane. Interacts with SLC26A3, SLC26A6 and NHERF1. Interacts with SHANK2. Interacts with MYO6. Interacts (via C-terminus) with GOPC (via PDZ domain); this promotes CFTR internalization and thereby decreases channel activity. Interacts with SLC4A7 through NHERF1. Found in a complex with MYO5B and RAB11A. Interacts with ANO1. Interacts with SLC26A8. Interacts with AHCYL1; the interaction increases CFTR activity. Interacts with CSE1L. The core-glycosylated form interacts with GORASP2 (via PDZ GRASP-type 1 domain) in respone to ER stress. Interacts with MARCHF2; the interaction leads to CFTR ubiqtuitination and degradation. Interacts with ADGRG2. In terms of processing, N-glycosylated. Post-translationally, phosphorylated; cAMP treatment promotes phosphorylation and activates the channel. Dephosphorylation decreases the ATPase activity (in vitro). Phosphorylation at PKA sites activates the channel. Phosphorylation at PKC sites enhances the response to phosphorylation by PKA. Phosphorylated by AMPK; this inhibits channel activity. Ubiquitinated, leading to its degradation in the lysosome. Deubiquitination by USP10 in early endosomes enhances its endocytic recycling to the cell membrane. Ubiquitinated by RNF185 during ER stress. Ubiquitinated by MARCHF2.

The protein localises to the apical cell membrane. It is found in the early endosome membrane. It localises to the cell membrane. The protein resides in the recycling endosome membrane. Its subcellular location is the endoplasmic reticulum membrane. The protein localises to the nucleus. The catalysed reaction is ATP + H2O + closed Cl(-) channel = ADP + phosphate + open Cl(-) channel.. It carries out the reaction chloride(in) = chloride(out). The enzyme catalyses hydrogencarbonate(in) = hydrogencarbonate(out). It catalyses the reaction ATP + H2O = ADP + phosphate + H(+). Epithelial ion channel that plays an important role in the regulation of epithelial ion and water transport and fluid homeostasis. Mediates the transport of chloride ions across the cell membrane. Possesses an intrinsic ATPase activity and utilizes ATP to gate its channel; the passive flow of anions through the channel is gated by cycles of ATP binding and hydrolysis by the ATP-binding domains. The ion channel is also permeable to HCO(3)(-); selectivity depends on the extracellular chloride concentration. Exerts its function also by modulating the activity of other ion channels and transporters. Contributes to the regulation of the pH and the ion content of the epithelial fluid layer. Modulates the activity of the epithelial sodium channel (ENaC) complex, in part by regulating the cell surface expression of the ENaC complex. May regulate bicarbonate secretion and salvage in epithelial cells by regulating the transporter SLC4A7. Can inhibit the chloride channel activity of ANO1. Plays a role in the chloride and bicarbonate homeostasis during sperm epididymal maturation and capacitation. This Ornithorhynchus anatinus (Duckbill platypus) protein is Cystic fibrosis transmembrane conductance regulator.